A 633-amino-acid chain; its full sequence is 1-deoxy-D-xylulose-5-phosphate synthase 2 (633 aa).

Residues histidine 73 and 113–115 (SHA) contribute to the thiamine diphosphate site. Position 145 (aspartate 145) interacts with Mg(2+). Residues 146–147 (GA), asparagine 175, tyrosine 286, and glutamate 367 contribute to the thiamine diphosphate site. Asparagine 175 lines the Mg(2+) pocket.

This sequence belongs to the transketolase family. DXPS subfamily. In terms of assembly, homodimer. Mg(2+) serves as cofactor. Thiamine diphosphate is required as a cofactor.

The enzyme catalyses D-glyceraldehyde 3-phosphate + pyruvate + H(+) = 1-deoxy-D-xylulose 5-phosphate + CO2. It participates in metabolic intermediate biosynthesis; 1-deoxy-D-xylulose 5-phosphate biosynthesis; 1-deoxy-D-xylulose 5-phosphate from D-glyceraldehyde 3-phosphate and pyruvate: step 1/1. In terms of biological role, catalyzes the acyloin condensation reaction between C atoms 2 and 3 of pyruvate and glyceraldehyde 3-phosphate to yield 1-deoxy-D-xylulose-5-phosphate (DXP). In Kitasatospora griseola (Streptomyces griseolosporeus), this protein is 1-deoxy-D-xylulose-5-phosphate synthase 2.